The following is a 913-amino-acid chain: Eukaryotic translation initiation factor 3 subunit C (913 aa).

A disordered region spans residues 1–44 (MSRFFTTGSDSESESSLSGEELVTKPVGGNYGKQPLLLSEDEED). Low complexity predominate over residues 8–21 (GSDSESESSLSGEE). Phosphoserine occurs at positions 9, 11, 13, 15, 16, 18, and 39. At Lys99 the chain carries N6-acetyllysine. 2 disordered regions span residues 157-301 (TSYK…GGEW) and 522-542 (QLTP…NEGE). Ser166, Ser178, Ser181, and Ser182 each carry phosphoserine. Residues 166-190 (SADEDAEKNEEDSEGSSDEDEDEDG) show a composition bias toward acidic residues. Residues 199 to 216 (KKSEAPSGESRKFLKKMD) show a composition bias toward basic and acidic residues. Residues 217-232 (DEDEDSEDSEDDEDWD) show a composition bias toward acidic residues. Basic and acidic residues predominate over residues 261–278 (PTTDEDKKAAEKKREDKA). Residues 522–531 (QLTPPEGSSK) show a composition bias toward polar residues. Position 524 is a phosphothreonine (Thr524). Position 643 is an N6-acetyllysine (Lys643). The 177-residue stretch at 673–849 (FHLHINLELL…QTVVMHRTEP (177 aa)) folds into the PCI domain. The interval 885–913 (FRDQKDGYRKNEGYMRRGGYRQQQSQTAY) is disordered. Over residues 886–899 (RDQKDGYRKNEGYM) the composition is skewed to basic and acidic residues. Position 909 is a phosphoserine (Ser909).

Belongs to the eIF-3 subunit C family. As to quaternary structure, component of the eukaryotic translation initiation factor 3 (eIF-3) complex, which is composed of 13 subunits: EIF3A, EIF3B, EIF3C, EIF3D, EIF3E, EIF3F, EIF3G, EIF3H, EIF3I, EIF3J, EIF3K, EIF3L and EIF3M. The eIF-3 complex appears to include 3 stable modules: module A is composed of EIF3A, EIF3B, EIF3G and EIF3I; module B is composed of EIF3F, EIF3H, and EIF3M; and module C is composed of EIF3C, EIF3D, EIF3E, EIF3K and EIF3L. EIF3C of module C binds EIF3B of module A and EIF3H of module B, thereby linking the three modules. EIF3J is a labile subunit that binds to the eIF-3 complex via EIF3B. The eIF-3 complex interacts with RPS6KB1 under conditions of nutrient depletion. Mitogenic stimulation leads to binding and activation of a complex composed of MTOR and RPTOR, leading to phosphorylation and release of RPS6KB1 and binding of EIF4B to eIF-3. Interacts with ALKBH4, IFIT1 and IFIT2. Interacts with BZW2/5MP1. Phosphorylated. Phosphorylation is enhanced upon serum stimulation.

The protein localises to the cytoplasm. Component of the eukaryotic translation initiation factor 3 (eIF-3) complex, which is required for several steps in the initiation of protein synthesis. The eIF-3 complex associates with the 40S ribosome and facilitates the recruitment of eIF-1, eIF-1A, eIF-2:GTP:methionyl-tRNAi and eIF-5 to form the 43S pre-initiation complex (43S PIC). The eIF-3 complex stimulates mRNA recruitment to the 43S PIC and scanning of the mRNA for AUG recognition. The eIF-3 complex is also required for disassembly and recycling of post-termination ribosomal complexes and subsequently prevents premature joining of the 40S and 60S ribosomal subunits prior to initiation. The eIF-3 complex specifically targets and initiates translation of a subset of mRNAs involved in cell proliferation, including cell cycling, differentiation and apoptosis, and uses different modes of RNA stem-loop binding to exert either translational activation or repression. This is Eukaryotic translation initiation factor 3 subunit C from Pongo abelii (Sumatran orangutan).